Here is a 362-residue protein sequence, read N- to C-terminus: Heat-inducible transcription repressor HrcA (362 aa).

The protein belongs to the HrcA family.

Its function is as follows. Negative regulator of class I heat shock genes (grpE-dnaK-dnaJ and groELS operons). Prevents heat-shock induction of these operons. This is Heat-inducible transcription repressor HrcA from Nitrobacter winogradskyi (strain ATCC 25391 / DSM 10237 / CIP 104748 / NCIMB 11846 / Nb-255).